A 350-amino-acid polypeptide reads, in one-letter code: Galactokinase (350 aa).

Glutamate 14–aspartate 17 provides a ligand contact to substrate. Residues serine 46 and glycine 96 to serine 102 contribute to the ATP site. Positions 102 and 134 each coordinate Mg(2+). The Proton acceptor role is filled by aspartate 146. Position 196 (tyrosine 196) interacts with substrate.

This sequence belongs to the GHMP kinase family. GalK subfamily.

The protein resides in the cytoplasm. The catalysed reaction is alpha-D-galactose + ATP = alpha-D-galactose 1-phosphate + ADP + H(+). It functions in the pathway carbohydrate metabolism; galactose metabolism. Catalyzes the transfer of the gamma-phosphate of ATP to D-galactose to form alpha-D-galactose-1-phosphate (Gal-1-P). The chain is Galactokinase from Thermotoga neapolitana (strain ATCC 49049 / DSM 4359 / NBRC 107923 / NS-E).